The following is a 580-amino-acid chain: Putative adenine deaminase YerA (580 aa).

Ser399 is subject to Phosphoserine.

Belongs to the metallo-dependent hydrolases superfamily. Adenine deaminase family.

It catalyses the reaction adenine + H2O + H(+) = hypoxanthine + NH4(+). This is Putative adenine deaminase YerA (yerA) from Bacillus subtilis (strain 168).